The following is a 35-amino-acid chain: Photosystem II reaction center protein Psb30 (35 aa).

A helical transmembrane segment spans residues 7–27 (LIANFAALALITLAGPAVIFI).

It belongs to the Psb30/Ycf12 family. In terms of assembly, PSII is composed of 1 copy each of membrane proteins PsbA, PsbB, PsbC, PsbD, PsbE, PsbF, PsbH, PsbI, PsbJ, PsbK, PsbL, PsbM, PsbT, PsbX, PsbY, PsbZ, Psb30/Ycf12, peripheral proteins of the oxygen-evolving complex and a large number of cofactors. It forms dimeric complexes.

It localises to the plastid. Its subcellular location is the organellar chromatophore thylakoid membrane. In terms of biological role, a core subunit of photosystem II (PSII), probably helps stabilize the reaction center. The sequence is that of Photosystem II reaction center protein Psb30 from Paulinella chromatophora.